The primary structure comprises 327 residues: 2-methoxy-6-polyprenyl-1,4-benzoquinol methylase, mitochondrial (327 aa).

Residues 1-49 constitute a mitochondrion transit peptide; the sequence is MAAPRSCVLWSYCGHGWSRLAGDCRLPGFRRSWLGATLSARSLSQEKRA. Residues threonine 117, aspartate 171, and 199-200 contribute to the S-adenosyl-L-methionine site; that span reads DA.

It belongs to the class I-like SAM-binding methyltransferase superfamily. MenG/UbiE family. As to quaternary structure, component of a multi-subunit COQ enzyme complex, composed of at least COQ3, COQ4, COQ5, COQ6, COQ7 and COQ9. Interacts with PYURF; the interaction is direct, stabilizes COQ5 protein and associates PYURF with COQ enzyme complex.

The protein localises to the mitochondrion inner membrane. The catalysed reaction is 2-methoxy-6-(all-trans-decaprenyl)benzene-1,4-diol + S-adenosyl-L-methionine = 5-methoxy-2-methyl-3-(all-trans-decaprenyl)benzene-1,4-diol + S-adenosyl-L-homocysteine + H(+). It participates in cofactor biosynthesis; ubiquinone biosynthesis. Functionally, methyltransferase required for the conversion of 2-decaprenyl-6-methoxy-1,4-benzoquinol (DDMQH2) to 2-decaprenyl-3-methyl-6-methoxy-1,4-benzoquinol (DMQH2). This Rattus norvegicus (Rat) protein is 2-methoxy-6-polyprenyl-1,4-benzoquinol methylase, mitochondrial.